The chain runs to 570 residues: Methionine--tRNA ligase (570 aa).

A 'HIGH' region motif is present at residues 11 to 21 (PYVQTVPHLGN). Cys143, Cys146, Cys156, and Cys159 together coordinate Zn(2+). The 'KMSKS' region signature appears at 333 to 337 (KFSKS). Lys336 provides a ligand contact to ATP.

This sequence belongs to the class-I aminoacyl-tRNA synthetase family. MetG type 1 subfamily. It depends on Zn(2+) as a cofactor.

The protein localises to the cytoplasm. The catalysed reaction is tRNA(Met) + L-methionine + ATP = L-methionyl-tRNA(Met) + AMP + diphosphate. Is required not only for elongation of protein synthesis but also for the initiation of all mRNA translation through initiator tRNA(fMet) aminoacylation. The chain is Methionine--tRNA ligase from Pyrobaculum arsenaticum (strain DSM 13514 / JCM 11321 / PZ6).